The sequence spans 441 residues: Glutamyl-tRNA reductase (441 aa).

Substrate-binding positions include Thr-47 to Arg-50, Ser-110, Glu-115 to Glu-117, and Gln-121. Cys-48 functions as the Nucleophile in the catalytic mechanism. Gly-192–Ala-197 serves as a coordination point for NADP(+).

Belongs to the glutamyl-tRNA reductase family. Homodimer.

The catalysed reaction is (S)-4-amino-5-oxopentanoate + tRNA(Glu) + NADP(+) = L-glutamyl-tRNA(Glu) + NADPH + H(+). It participates in porphyrin-containing compound metabolism; protoporphyrin-IX biosynthesis; 5-aminolevulinate from L-glutamyl-tRNA(Glu): step 1/2. Its function is as follows. Catalyzes the NADPH-dependent reduction of glutamyl-tRNA(Glu) to glutamate 1-semialdehyde (GSA). The chain is Glutamyl-tRNA reductase from Pseudarthrobacter chlorophenolicus (strain ATCC 700700 / DSM 12829 / CIP 107037 / JCM 12360 / KCTC 9906 / NCIMB 13794 / A6) (Arthrobacter chlorophenolicus).